The following is a 95-amino-acid chain: Co-chaperonin GroES (95 aa).

This sequence belongs to the GroES chaperonin family. In terms of assembly, heptamer of 7 subunits arranged in a ring. Interacts with the chaperonin GroEL.

It localises to the cytoplasm. Its function is as follows. Together with the chaperonin GroEL, plays an essential role in assisting protein folding. The GroEL-GroES system forms a nano-cage that allows encapsulation of the non-native substrate proteins and provides a physical environment optimized to promote and accelerate protein folding. GroES binds to the apical surface of the GroEL ring, thereby capping the opening of the GroEL channel. This is Co-chaperonin GroES from Rickettsia rickettsii (strain Sheila Smith).